A 597-amino-acid chain; its full sequence is Probable translation initiation factor IF-2 (597 aa).

Positions 10 to 226 (LRTPIVAVLG…LMGLSQRFMK (217 aa)) constitute a tr-type G domain. The tract at residues 19–26 (GHVDHGKT) is G1. 19-26 (GHVDHGKT) contributes to the GTP binding site. A G2 region spans residues 44-48 (AITQH). The segment at 81–84 (DTPG) is G3. Residues 81 to 85 (DTPGH) and 135 to 138 (NKVD) each bind GTP. Residues 135-138 (NKVD) form a G4 region. A G5 region spans residues 203–205 (SAI).

It belongs to the TRAFAC class translation factor GTPase superfamily. Classic translation factor GTPase family. IF-2 subfamily.

Its function is as follows. Function in general translation initiation by promoting the binding of the formylmethionine-tRNA to ribosomes. Seems to function along with eIF-2. In Halorubrum lacusprofundi (strain ATCC 49239 / DSM 5036 / JCM 8891 / ACAM 34), this protein is Probable translation initiation factor IF-2.